Reading from the N-terminus, the 444-residue chain is Argininosuccinate synthase (444 aa).

Residues 18–26 and alanine 44 contribute to the ATP site; that span reads AFSGGLDTS. Tyrosine 100 serves as a coordination point for L-citrulline. ATP is bound by residues glycine 130 and threonine 132. Positions 132, 136, and 137 each coordinate L-aspartate. Residue asparagine 136 coordinates L-citrulline. An ATP-binding site is contributed by aspartate 137. Arginine 140 and serine 193 together coordinate L-citrulline. ATP is bound at residue aspartate 195. The L-citrulline site is built by threonine 202, glutamate 204, and glutamate 281.

It belongs to the argininosuccinate synthase family. Type 2 subfamily. In terms of assembly, homotetramer.

It is found in the cytoplasm. The enzyme catalyses L-citrulline + L-aspartate + ATP = 2-(N(omega)-L-arginino)succinate + AMP + diphosphate + H(+). It participates in amino-acid biosynthesis; L-arginine biosynthesis; L-arginine from L-ornithine and carbamoyl phosphate: step 2/3. The chain is Argininosuccinate synthase from Haemophilus influenzae (strain PittGG).